We begin with the raw amino-acid sequence, 101 residues long: Small ribosomal subunit protein uS14 (101 aa).

The protein belongs to the universal ribosomal protein uS14 family. Part of the 30S ribosomal subunit. Contacts proteins S3 and S10.

Its function is as follows. Binds 16S rRNA, required for the assembly of 30S particles and may also be responsible for determining the conformation of the 16S rRNA at the A site. This chain is Small ribosomal subunit protein uS14, found in Chromobacterium violaceum (strain ATCC 12472 / DSM 30191 / JCM 1249 / CCUG 213 / NBRC 12614 / NCIMB 9131 / NCTC 9757 / MK).